The primary structure comprises 457 residues: Adenylyltransferase and sulfurtransferase MOCS3 (457 aa).

The disordered stretch occupies residues 40-60 (ANGGGNGDGLADEGGERNTGT). Residue threonine 63 is modified to Phosphothreonine. ATP contacts are provided by residues glycine 102, aspartate 123, 130 to 134 (SNFHR), lysine 147, and 191 to 192 (DN). Zn(2+) is bound by residues cysteine 233 and cysteine 236. Catalysis depends on cysteine 250, which acts as the Glycyl thioester intermediate; for adenylyltransferase activity. Zn(2+)-binding residues include cysteine 309 and cysteine 312. In terms of domain architecture, Rhodanese spans 358-455 (ESQPHLLFDV…WTRKVDPDFP (98 aa)). The Cysteine persulfide intermediate; for sulfurtransferase activity role is filled by cysteine 414.

It in the N-terminal section; belongs to the HesA/MoeB/ThiF family. UBA4 subfamily. It depends on Zn(2+) as a cofactor.

The protein localises to the cytoplasm. The protein resides in the cytosol. It carries out the reaction [molybdopterin-synthase sulfur-carrier protein]-C-terminal Gly-Gly + ATP + H(+) = [molybdopterin-synthase sulfur-carrier protein]-C-terminal Gly-Gly-AMP + diphosphate. It catalyses the reaction [molybdopterin-synthase sulfur-carrier protein]-C-terminal Gly-Gly-AMP + S-sulfanyl-L-cysteinyl-[cysteine desulfurase] + AH2 = [molybdopterin-synthase sulfur-carrier protein]-C-terminal-Gly-aminoethanethioate + L-cysteinyl-[cysteine desulfurase] + A + AMP + 2 H(+). It participates in tRNA modification; 5-methoxycarbonylmethyl-2-thiouridine-tRNA biosynthesis. The protein operates within cofactor biosynthesis; molybdopterin biosynthesis. Plays a central role in 2-thiolation of mcm(5)S(2)U at tRNA wobble positions of cytosolic tRNA(Lys), tRNA(Glu) and tRNA(Gln). Also essential during biosynthesis of the molybdenum cofactor. Acts by mediating the C-terminal thiocarboxylation of sulfur carriers URM1 and MOCS2A. Its N-terminus first activates URM1 and MOCS2A as acyl-adenylates (-COAMP), then the persulfide sulfur on the catalytic cysteine is transferred to URM1 and MOCS2A to form thiocarboxylation (-COSH) of their C-terminus. The reaction probably involves hydrogen sulfide that is generated from the persulfide intermediate and that acts as a nucleophile towards URM1 and MOCS2A. Subsequently, a transient disulfide bond is formed. Does not use thiosulfate as sulfur donor; NFS1 probably acting as a sulfur donor for thiocarboxylation reactions. The sequence is that of Adenylyltransferase and sulfurtransferase MOCS3 from Drosophila willistoni (Fruit fly).